We begin with the raw amino-acid sequence, 447 residues long: MVEKDTWKLITATALFTVAVTTITDYAWTSWQAQKQVIAQQKNKNKGGQTKSDTDKYHQYDEQFIRQSLKNNVEFLGEDTIEKLSNQYVVVVGAGGVGSWVVNSLVRSGCRKIRVVDFDQVSLSSLNRHSCAILNDVGTPKVECLRRHMREIAPWCEIDPINELWTLQNGERLTLGNGTPDFIVDCIDNIDTKVDLLEFAYNHGIKVISSMGASAKSDPTKLNVGDLATTEEDPLARVVRRKLKKRGILSGIPVVFSAEKPDPKKAKLLPLPDEEYERGKVDELSALKDFRVRILPVLGTMPSLFGLTITTWILSNISDKPLEPVEGKNRIKVYDGIYQSLAGQMSRVGIPSQRIPLALKDVSYLVEEVFKGKSPISGISTRLTLTKWDPSKPISLQNVVVLTKNEQKVHEDRVLKGKESLQDVYDAKVLKLVSQRFREEAYYSQFR.

Helical transmembrane passes span 9–29 (LITATALFTVAVTTITDYAWT), 86–106 (NQYVVVVGAGGVGSWVVNSLV), and 294–314 (ILPVLGTMPSLFGLTITTWIL).

It belongs to the HesA/MoeB/ThiF family.

It localises to the mitochondrion outer membrane. In terms of biological role, catalyzes the ATP-dependent dehydration of threonylcarbamoyladenosine at position 37 (t(6)A37) to form cyclic t(6)A37 (ct(6)A37) in tRNAs that read codons beginning with adenine. This is tRNA threonylcarbamoyladenosine dehydratase 2 (TCD2) from Saccharomyces cerevisiae (strain ATCC 204508 / S288c) (Baker's yeast).